Here is a 557-residue protein sequence, read N- to C-terminus: Potassium-transporting ATPase potassium-binding subunit (557 aa).

A run of 12 helical transmembrane segments spans residues 5–25, 63–83, 132–152, 170–190, 253–273, 283–303, 329–349, 356–376, 379–399, 416–436, 484–504, and 526–546; these read GFLL…PLGS, LSAI…MLLG, GLTV…FALI, LLRI…LFFI, FVQM…FGEV, LLWA…WAEV, VLVS…AVIA, ALGG…FGGV, GLYG…LMIG, LTAL…ALAM, LLAL…MAIA, and LFVG…FIPA.

Belongs to the KdpA family. The system is composed of three essential subunits: KdpA, KdpB and KdpC.

It is found in the cell inner membrane. Its function is as follows. Part of the high-affinity ATP-driven potassium transport (or Kdp) system, which catalyzes the hydrolysis of ATP coupled with the electrogenic transport of potassium into the cytoplasm. This subunit binds the periplasmic potassium ions and delivers the ions to the membrane domain of KdpB through an intramembrane tunnel. The protein is Potassium-transporting ATPase potassium-binding subunit of Escherichia coli (strain UTI89 / UPEC).